Consider the following 997-residue polypeptide: Sorting nexin-19 (997 aa).

A PXA domain is found at 95-273 (ERQLEQEINR…ILVSIFSKYR (179 aa)). Disordered stretches follow at residues 313–333 (SSPATAPVHLTSSEPAPSPEI) and 413–437 (GALEPKDGEGSECMEGAEAEEAPGT). Positions 422 to 435 (GSECMEGAEAEEAP) are enriched in acidic residues. Residues 538-668 (LRITGTITAR…EFLALNTDAR (131 aa)) enclose the PX domain. Residues R587 and R634 each contribute to the a 1,2-diacyl-sn-glycero-3-phospho-(1D-myo-inositol-3-phosphate) site. Positions 697–728 (FPRSEPQSPTEELSEAENESKPQTEGKKASKS) are disordered. The segment covering 714–724 (NESKPQTEGKK) has biased composition (basic and acidic residues).

It belongs to the sorting nexin family. As to quaternary structure, interacts with PTPRN.

It is found in the early endosome membrane. Its subcellular location is the cytoplasmic vesicle membrane. Functionally, plays a role in intracellular vesicle trafficking and exocytosis. May play a role in maintaining insulin-containing dense core vesicles in pancreatic beta-cells and in preventing their degradation. May play a role in insulin secretion. Interacts with membranes containing phosphatidylinositol 3-phosphate (PtdIns(3P)). This Mus musculus (Mouse) protein is Sorting nexin-19.